Consider the following 184-residue polypeptide: Large ribosomal subunit protein bL9 (184 aa).

The disordered stretch occupies residues 160-184; that stretch reads LQNQKSEQQEAEQDANKEATDGDDS. Basic and acidic residues predominate over residues 173 to 184; sequence DANKEATDGDDS.

This sequence belongs to the bacterial ribosomal protein bL9 family.

Its function is as follows. Binds to the 23S rRNA. In Wolbachia pipientis wMel, this protein is Large ribosomal subunit protein bL9.